Here is a 158-residue protein sequence, read N- to C-terminus: EOLA-like protein (158 aa).

The region spanning 6-92 (LSFRQPYAGF…IAGLVDIGET (87 aa)) is the ASCH domain.

It belongs to the EOLA family.

The chain is EOLA-like protein from Pongo abelii (Sumatran orangutan).